We begin with the raw amino-acid sequence, 591 residues long: 4-coumarate--CoA ligase-like 3 (591 aa).

Ser228, Ser229, Gly230, Thr231, Ser232, and Lys236 together coordinate ATP. Tyr280 provides a ligand contact to (E)-4-coumaroyl-AMP. Arg301 is a CoA binding site. The SBD1 stretch occupies residues 303 to 375; it reads DAGDAVAAIG…QAFPHVDFIQ (73 aa). 4 residues coordinate (E)-4-coumaroyl-AMP: Ala353, Gln375, Gly376, and Thr380. ATP is bound by residues Gln375, Gly376, Thr380, Asp459, and Arg474. The interval 376–440 is SBD2; that stretch reads GYGMTESTAV…LHGPGIMKGY (65 aa). Lys476 and Lys480 together coordinate (E)-4-coumaroyl-AMP. Residues Lys482 and Gly483 each coordinate CoA. Residue Lys565 participates in ATP binding.

The protein belongs to the ATP-dependent AMP-binding enzyme family. Requires Mg(2+) as cofactor.

The enzyme catalyses (E)-4-coumarate + ATP + CoA = (E)-4-coumaroyl-CoA + AMP + diphosphate. It catalyses the reaction (E)-4-coumarate + ATP + H(+) = (E)-4-coumaroyl-AMP + diphosphate. It carries out the reaction (E)-4-coumaroyl-AMP + CoA = (E)-4-coumaroyl-CoA + AMP + H(+). Functionally, carboxylate--CoA ligase that may use 4-coumarate as substrate. Follows a two-step reaction mechanism, wherein the carboxylate substrate first undergoes adenylation by ATP, followed by a thioesterification in the presence of CoA to yield the final CoA thioester. This Oryza sativa subsp. japonica (Rice) protein is 4-coumarate--CoA ligase-like 3 (4CLL3).